We begin with the raw amino-acid sequence, 195 residues long: MSAVDVESRVRHQNFWFVACFAVLVIQIAVEYMMGRVPICACGYVKLWEGGVNTSGNSQHLSDWYTPSHIIHGFLFYGLAHLILRRKPLAAKLLLALVIESGWELLENSPLIIDRYRTATIALDYYGDSILNSAMDTVFMCVGFFFARRAPVALTVAIATFFEIFTGYIIRDNLTLNVVMLIWPVEAIKVWQGGV.

4 helical membrane passes run 15 to 35, 64 to 84, 127 to 147, and 150 to 170; these read FWFV…YMMG, WYTP…HLIL, GDSI…FFFA, and APVA…GYII.

The protein belongs to the UPF0314 family.

Its subcellular location is the cell membrane. This is UPF0314 protein RL4541 from Rhizobium johnstonii (strain DSM 114642 / LMG 32736 / 3841) (Rhizobium leguminosarum bv. viciae).